We begin with the raw amino-acid sequence, 550 residues long: Glucose-6-phosphate isomerase (550 aa).

Glu356 (proton donor) is an active-site residue. Residues His387 and Lys515 contribute to the active site.

The protein belongs to the GPI family.

It localises to the cytoplasm. The catalysed reaction is alpha-D-glucose 6-phosphate = beta-D-fructose 6-phosphate. It functions in the pathway carbohydrate biosynthesis; gluconeogenesis. It participates in carbohydrate degradation; glycolysis; D-glyceraldehyde 3-phosphate and glycerone phosphate from D-glucose: step 2/4. Its function is as follows. Catalyzes the reversible isomerization of glucose-6-phosphate to fructose-6-phosphate. The protein is Glucose-6-phosphate isomerase of Vibrio campbellii (strain ATCC BAA-1116).